A 256-amino-acid chain; its full sequence is tRNA-cytidine(32) 2-sulfurtransferase (256 aa).

Positions 35 to 40 match the PP-loop motif motif; the sequence is SGGKDS. 3 residues coordinate [4Fe-4S] cluster: Cys110, Cys113, and Cys201.

The protein belongs to the TtcA family. As to quaternary structure, homodimer. It depends on Mg(2+) as a cofactor. [4Fe-4S] cluster serves as cofactor.

The protein localises to the cytoplasm. The catalysed reaction is cytidine(32) in tRNA + S-sulfanyl-L-cysteinyl-[cysteine desulfurase] + AH2 + ATP = 2-thiocytidine(32) in tRNA + L-cysteinyl-[cysteine desulfurase] + A + AMP + diphosphate + H(+). Its pathway is tRNA modification. In terms of biological role, catalyzes the ATP-dependent 2-thiolation of cytidine in position 32 of tRNA, to form 2-thiocytidine (s(2)C32). The sulfur atoms are provided by the cysteine/cysteine desulfurase (IscS) system. The chain is tRNA-cytidine(32) 2-sulfurtransferase from Coxiella burnetii (strain Dugway 5J108-111).